A 629-amino-acid chain; its full sequence is tRNA uridine 5-carboxymethylaminomethyl modification enzyme MnmG (629 aa).

FAD is bound at residue 13-18 (GGGHAG). Residue 273–287 (GPRYCPSIEDKITRF) coordinates NAD(+).

It belongs to the MnmG family. In terms of assembly, homodimer. Heterotetramer of two MnmE and two MnmG subunits. It depends on FAD as a cofactor.

It is found in the cytoplasm. In terms of biological role, NAD-binding protein involved in the addition of a carboxymethylaminomethyl (cmnm) group at the wobble position (U34) of certain tRNAs, forming tRNA-cmnm(5)s(2)U34. The chain is tRNA uridine 5-carboxymethylaminomethyl modification enzyme MnmG from Aeromonas salmonicida (strain A449).